A 102-amino-acid chain; its full sequence is Protein RnfH (102 aa).

This sequence belongs to the UPF0125 (RnfH) family.

The polypeptide is Protein RnfH (Haemophilus influenzae (strain 86-028NP)).